A 111-amino-acid polypeptide reads, in one-letter code: Large ribosomal subunit protein uL22 (111 aa).

This sequence belongs to the universal ribosomal protein uL22 family. Part of the 50S ribosomal subunit.

In terms of biological role, this protein binds specifically to 23S rRNA; its binding is stimulated by other ribosomal proteins, e.g. L4, L17, and L20. It is important during the early stages of 50S assembly. It makes multiple contacts with different domains of the 23S rRNA in the assembled 50S subunit and ribosome. Its function is as follows. The globular domain of the protein is located near the polypeptide exit tunnel on the outside of the subunit, while an extended beta-hairpin is found that lines the wall of the exit tunnel in the center of the 70S ribosome. This is Large ribosomal subunit protein uL22 from Clostridium kluyveri (strain NBRC 12016).